Reading from the N-terminus, the 358-residue chain is 3-dehydroquinate synthase (358 aa).

Residues 104-108 (GVIGD), 128-129 (TT), K140, K149, and 167-170 (FLNT) each bind NAD(+). Zn(2+) contacts are provided by E182, H246, and H260.

Belongs to the sugar phosphate cyclases superfamily. Dehydroquinate synthase family. Co(2+) serves as cofactor. Zn(2+) is required as a cofactor. Requires NAD(+) as cofactor.

The protein resides in the cytoplasm. It catalyses the reaction 7-phospho-2-dehydro-3-deoxy-D-arabino-heptonate = 3-dehydroquinate + phosphate. It participates in metabolic intermediate biosynthesis; chorismate biosynthesis; chorismate from D-erythrose 4-phosphate and phosphoenolpyruvate: step 2/7. Functionally, catalyzes the conversion of 3-deoxy-D-arabino-heptulosonate 7-phosphate (DAHP) to dehydroquinate (DHQ). This is 3-dehydroquinate synthase from Staphylococcus carnosus (strain TM300).